We begin with the raw amino-acid sequence, 344 residues long: GTP 3',8-cyclase (344 aa).

The Radical SAM core domain occupies 19–245 (PFGRAVTYLR…DIPYRTGGPA (227 aa)). Arg28 lines the GTP pocket. [4Fe-4S] cluster-binding residues include Cys35 and Cys39. Residue Tyr41 coordinates S-adenosyl-L-methionine. Position 42 (Cys42) interacts with [4Fe-4S] cluster. Position 77 (Arg77) interacts with GTP. An S-adenosyl-L-methionine-binding site is contributed by Gly81. Thr111 is a binding site for GTP. An S-adenosyl-L-methionine-binding site is contributed by Ser135. Lys171 contacts GTP. Met205 is a binding site for S-adenosyl-L-methionine. Residues Cys268 and Cys271 each coordinate [4Fe-4S] cluster. 273–275 (RVR) contributes to the GTP binding site. A [4Fe-4S] cluster-binding site is contributed by Cys285.

It belongs to the radical SAM superfamily. MoaA family. As to quaternary structure, monomer and homodimer. Requires [4Fe-4S] cluster as cofactor.

It carries out the reaction GTP + AH2 + S-adenosyl-L-methionine = (8S)-3',8-cyclo-7,8-dihydroguanosine 5'-triphosphate + 5'-deoxyadenosine + L-methionine + A + H(+). Its pathway is cofactor biosynthesis; molybdopterin biosynthesis. Functionally, catalyzes the cyclization of GTP to (8S)-3',8-cyclo-7,8-dihydroguanosine 5'-triphosphate. This chain is GTP 3',8-cyclase, found in Brucella abortus (strain S19).